The chain runs to 126 residues: Cell cycle protein GpsB (126 aa).

Residues 35-72 (LDLVIKDYQTYQENIDRLTADNTRLFNKVEELNRQLSA) adopt a coiled-coil conformation.

It belongs to the GpsB family. Forms polymers through the coiled coil domains. Interacts with PBP1, MreC and EzrA.

Its subcellular location is the cytoplasm. Divisome component that associates with the complex late in its assembly, after the Z-ring is formed, and is dependent on DivIC and PBP2B for its recruitment to the divisome. Together with EzrA, is a key component of the system that regulates PBP1 localization during cell cycle progression. Its main role could be the removal of PBP1 from the cell pole after pole maturation is completed. Also contributes to the recruitment of PBP1 to the division complex. Not essential for septum formation. The chain is Cell cycle protein GpsB from Latilactobacillus sakei subsp. sakei (strain 23K) (Lactobacillus sakei subsp. sakei).